Reading from the N-terminus, the 343-residue chain is Aspartate carbamoyltransferase catalytic subunit (343 aa).

Positions 91 and 92 each coordinate carbamoyl phosphate. Lys119 serves as a coordination point for L-aspartate. The carbamoyl phosphate site is built by Arg141, His171, and Gln174. 2 residues coordinate L-aspartate: Arg204 and Arg259. Residues Gly300 and Pro301 each contribute to the carbamoyl phosphate site.

Belongs to the aspartate/ornithine carbamoyltransferase superfamily. ATCase family. In terms of assembly, heterododecamer (2C3:3R2) of six catalytic PyrB chains organized as two trimers (C3), and six regulatory PyrI chains organized as three dimers (R2).

The catalysed reaction is carbamoyl phosphate + L-aspartate = N-carbamoyl-L-aspartate + phosphate + H(+). It participates in pyrimidine metabolism; UMP biosynthesis via de novo pathway; (S)-dihydroorotate from bicarbonate: step 2/3. In terms of biological role, catalyzes the condensation of carbamoyl phosphate and aspartate to form carbamoyl aspartate and inorganic phosphate, the committed step in the de novo pyrimidine nucleotide biosynthesis pathway. The protein is Aspartate carbamoyltransferase catalytic subunit of Burkholderia cenocepacia (strain HI2424).